Consider the following 357-residue polypeptide: Glucose 1-dehydrogenase (357 aa).

D38 contributes to the Zn(2+) binding site. T40 and H49 together coordinate substrate. Residues H63 and E64 each contribute to the Zn(2+) site. Substrate-binding residues include E114 and E150. E150 serves as a coordination point for Zn(2+). Residues 181–184 (NGSL), 207–208 (RR), S228, 272–274 (LGV), and 301–303 (SVN) each bind NADP(+). N303 provides a ligand contact to substrate.

The protein belongs to the zinc-containing alcohol dehydrogenase family. Glucose 1-dehydrogenase subfamily. In terms of assembly, homodimer. Zn(2+) serves as cofactor.

The catalysed reaction is D-glucose + NAD(+) = D-glucono-1,5-lactone + NADH + H(+). The enzyme catalyses D-glucose + NADP(+) = D-glucono-1,5-lactone + NADPH + H(+). With respect to regulation, activated by molar concentrations of KCl or NaCl. Inhibited by EDTA in vitro. Functionally, catalyzes the NAD(P)(+)-dependent oxidation of D-glucose to D-gluconate. Displays broad substrate specificity since it is able to catalyze the oxidation of a number of alternative aldose sugars, such as D-xylose, D-galactose, and D-fucose, to the corresponding glyconate. Can utilize both NAD(+) and NADP(+) as electron acceptor, with a preference for NADP(+). Physiologically, seems to be involved in the degradation of glucose through a modified Entner-Doudoroff pathway. The protein is Glucose 1-dehydrogenase of Haloferax mediterranei (strain ATCC 33500 / DSM 1411 / JCM 8866 / NBRC 14739 / NCIMB 2177 / R-4) (Halobacterium mediterranei).